The primary structure comprises 146 residues: Probable NADH dehydrogenase [ubiquinone] 1 alpha subcomplex subunit 12 (146 aa).

The protein belongs to the complex I NDUFA12 subunit family. In terms of assembly, complex I is composed of 45 different subunits.

The protein resides in the mitochondrion inner membrane. In terms of biological role, accessory subunit of the mitochondrial membrane respiratory chain NADH dehydrogenase (Complex I), that is believed not to be involved in catalysis. Complex I functions in the transfer of electrons from NADH to the respiratory chain. The immediate electron acceptor for the enzyme is believed to be ubiquinone. This chain is Probable NADH dehydrogenase [ubiquinone] 1 alpha subcomplex subunit 12, found in Caenorhabditis elegans.